A 294-amino-acid polypeptide reads, in one-letter code: Porphobilinogen deaminase (294 aa).

C232 is modified (S-(dipyrrolylmethanemethyl)cysteine).

It belongs to the HMBS family. In terms of assembly, monomer. It depends on dipyrromethane as a cofactor.

The enzyme catalyses 4 porphobilinogen + H2O = hydroxymethylbilane + 4 NH4(+). Its pathway is porphyrin-containing compound metabolism; protoporphyrin-IX biosynthesis; coproporphyrinogen-III from 5-aminolevulinate: step 2/4. Its function is as follows. Tetrapolymerization of the monopyrrole PBG into the hydroxymethylbilane pre-uroporphyrinogen in several discrete steps. This chain is Porphobilinogen deaminase, found in Corynebacterium diphtheriae (strain ATCC 700971 / NCTC 13129 / Biotype gravis).